We begin with the raw amino-acid sequence, 215 residues long: Chaperone protein TorD (215 aa).

This sequence belongs to the TorD/DmsD family. TorD subfamily.

Its subcellular location is the cytoplasm. Functionally, involved in the biogenesis of TorA. Acts on TorA before the insertion of the molybdenum cofactor and, as a result, probably favors a conformation of the apoenzyme that is competent for acquiring the cofactor. This chain is Chaperone protein TorD, found in Vibrio vulnificus (strain CMCP6).